The sequence spans 490 residues: Myocilin (490 aa).

A signal peptide spans 1-18 (MPATQLLLLACLVWGLGA). Asparagine 43 carries N-linked (GlcNAc...) asparagine glycosylation. A coiled-coil region spans residues 52–169 (QAMSAIQDLQ…SQEVARLRRG (118 aa)). The segment covering 146-157 (REENEDLARRLD) has biased composition (basic and acidic residues). Residues 146-188 (REENEDLARRLDSSSQEVARLRRGQCPQARGTPQDVPSGSREV) are disordered. The region spanning 230–489 (GCGELVWVGE…MVTYDLRLSE (260 aa)) is the Olfactomedin-like domain. A disulfide bridge links cysteine 231 with cysteine 419. Ca(2+)-binding residues include aspartate 366, asparagine 414, alanine 415, valine 463, and aspartate 464. Residues 488 to 490 (SEM) carry the Microbody targeting signal motif.

As to quaternary structure, homodimer (via N-terminus). Can also form higher oligomers. Interacts with OLFM3, FN1, NRCAM, GLDN and NFASC. Interacts (via N-terminus) with MYL2. Interacts with SFRP1, FRZB, FZD7, FZD10, FZD1 and WIF1; regulates Wnt signaling. Interacts with SNTA1; regulates muscle hypertrophy. Interacts with ERBB2 and ERBB3; activates ERBB2-ERBB3 signaling pathway. Interacts with SNCG; affects its secretion and its aggregation. In terms of processing, palmitoylated. Undergoes a calcium-dependent proteolytic cleavage at Arg-212 by CAPN2 in the endoplasmic reticulum. The result is the production of two fragments, one of 35 kDa containing the C-terminal olfactomedin-like domain, and another of 20 kDa containing the N-terminal leucine zipper-like domain. Post-translationally, glycosylated. In terms of tissue distribution, expressed in optic nerve head, ciliary body and retina.

Its subcellular location is the secreted. The protein resides in the golgi apparatus. The protein localises to the cytoplasmic vesicle. It localises to the extracellular space. It is found in the extracellular matrix. Its subcellular location is the extracellular exosome. The protein resides in the mitochondrion. The protein localises to the mitochondrion intermembrane space. It localises to the mitochondrion inner membrane. It is found in the mitochondrion outer membrane. Its subcellular location is the rough endoplasmic reticulum. The protein resides in the cell projection. The protein localises to the cilium. It localises to the endoplasmic reticulum. Secreted glycoprotein regulating the activation of different signaling pathways in adjacent cells to control different processes including cell adhesion, cell-matrix adhesion, cytoskeleton organization and cell migration. Promotes substrate adhesion, spreading and formation of focal contacts. Negatively regulates cell-matrix adhesion and stress fiber assembly through Rho protein signal transduction. Modulates the organization of actin cytoskeleton by stimulating the formation of stress fibers through interactions with components of Wnt signaling pathways. Promotes cell migration through activation of PTK2 and the downstream phosphatidylinositol 3-kinase signaling. Plays a role in bone formation and promotes osteoblast differentiation in a dose-dependent manner through mitogen-activated protein kinase signaling. Mediates myelination in the peripheral nervous system through ERBB2/ERBB3 signaling. Plays a role as a regulator of muscle hypertrophy through the components of dystrophin-associated protein complex. Involved in positive regulation of mitochondrial depolarization. Plays a role in neurite outgrowth. May participate in the obstruction of fluid outflow in the trabecular meshwork. This chain is Myocilin (MYOC), found in Felis catus (Cat).